Here is a 242-residue protein sequence, read N- to C-terminus: Ferritin, mitochondrial (242 aa).

The N-terminal 49 residues, 1–49 (MLPCSLFLPKHISTSLVFLRSARHGFALLPRWVPRLSSDYPPAAPIRLL), are a transit peptide targeting the mitochondrion. A Ferritin-like diiron domain is found at 70-219 (QNFHPDSEAA…DHVNNLVKMG (150 aa)). Positions 87, 122, 125, 167, and 201 each coordinate Fe cation.

It belongs to the ferritin family. As to quaternary structure, homooligomer of 24 subunits. The functional molecule is roughly spherical and contains a central cavity into which the polymeric mineral iron core is deposited.

Its subcellular location is the mitochondrion. It carries out the reaction 4 Fe(2+) + O2 + 4 H(+) = 4 Fe(3+) + 2 H2O. In terms of biological role, catalyzes the oxidation of ferrous iron(II) to ferric iron(III) and stores iron in a soluble, non-toxic, readily available form. Important for iron homeostasis. Iron is taken up in the ferrous form and deposited as ferric hydroxides after oxidation. The protein is Ferritin, mitochondrial of Bos taurus (Bovine).